Here is a 594-residue protein sequence, read N- to C-terminus: MAAESGELIGACEFMKDRLYFATLRNRPKSTVNTHYFSIDEELVYENFYADFGPLNLAMVYRYCCKLNKKLKSYSLSRKKIVHYTCFDQRKRANAAFLIGAYAVIYLKKTPEEAYRALLSGSNPPYLPFRDASFGNCTYNLTILDCLQGIRKGLQHGFFDFETFDVDEYEHYERVENGDFNWIVPGKFLAFSGPHPKSKIENGYPLHAPEAYFPYFKKHNVTAVVRLNKKIYEAKRFTDAGFEHYDLFFIDGSTPSDNIVRRFLNICENTEGAIAVHCKAGLGRTGTLIACYVMKHYRFTHAEIIAWIRICRPGSIIGPQQHFLEEKQASLWVQGDIFRSKLKNRPSSEGSINKILSGLDDMSIGGNLSKTQNMERFGEDNLEDDDVEMKNGITQGDKLRALKSQRQPRTSPSCAFRSDDTKGHPRAVSQPFRLSSSLQGSAVTLKTSKMALSPSATAKRINRTSLSSGATVRSFSINSRLASSLGNLNAATDDPENKKTSSSSKAGFTASPFTNLLNGSSQPTTRNYPELNNNQYNRSSNSNGGNLNSPPGPHSAKTEEHTTILRPSYTGLSSSSARFLSRSIPSLQSEYVHY.

The tract at residues 7-162 (ELIGACEFMK…GLQHGFFDFE (156 aa)) is a. The linker stretch occupies residues 163-176 (TFDVDEYEHYERVE). Residues 177–343 (NGDFNWIVPG…QGDIFRSKLK (167 aa)) form a b region. The Tyrosine-protein phosphatase domain maps to 179–336 (DFNWIVPGKF…KQASLWVQGD (158 aa)). Cysteine 278 acts as the Phosphocysteine intermediate in catalysis. A disordered region spans residues 396-435 (GDKLRALKSQRQPRTSPSCAFRSDDTKGHPRAVSQPFRLS). Over residues 404–413 (SQRQPRTSPS) the composition is skewed to polar residues. Serine 484 is modified (phosphoserine). The interval 487-560 (NLNAATDDPE…PGPHSAKTEE (74 aa)) is disordered. Over residues 500-531 (TSSSSKAGFTASPFTNLLNGSSQPTTRNYPEL) the composition is skewed to polar residues. Residues 532-549 (NNNQYNRSSNSNGGNLNS) are compositionally biased toward low complexity. Serine 583 bears the Phosphoserine mark.

It belongs to the protein-tyrosine phosphatase family. Non-receptor class CDC14 subfamily. In terms of assembly, interacts with KIF20A, which is required to localize CDC14 to the midzone of the mitotic spindle.

It localises to the nucleus. Its subcellular location is the cytoplasm. The protein resides in the cytoskeleton. The protein localises to the microtubule organizing center. It is found in the centrosome. It localises to the spindle pole. Its subcellular location is the spindle. The protein resides in the cell projection. The protein localises to the kinocilium. It is found in the stereocilium. It carries out the reaction O-phospho-L-tyrosyl-[protein] + H2O = L-tyrosyl-[protein] + phosphate. It catalyses the reaction O-phospho-L-seryl-[protein] + H2O = L-seryl-[protein] + phosphate. The catalysed reaction is O-phospho-L-threonyl-[protein] + H2O = L-threonyl-[protein] + phosphate. Dual-specificity phosphatase. Required for centrosome separation and productive cytokinesis during cell division. Dephosphorylates SIRT2 around early anaphase. May dephosphorylate the APC subunit FZR1/CDH1, thereby promoting APC-FZR1 dependent degradation of mitotic cyclins and subsequent exit from mitosis. Required for normal hearing. The sequence is that of Dual specificity protein phosphatase CDC14A (CDC14A) from Homo sapiens (Human).